The chain runs to 291 residues: Phytanoyl-CoA dioxygenase domain-containing protein 1 (291 aa).

Thr55 is subject to Phosphothreonine. 2-oxoglutarate-binding positions include Lys102, Met141, 156–158 (HQD), and Trp174. Residues His156 and Asp158 each contribute to the Fe cation site. Residue His246 participates in Fe cation binding. 2-oxoglutarate contacts are provided by Ser248 and Arg257.

Belongs to the PhyH family. PHYHD1 subfamily. Fe cation serves as cofactor.

Its function is as follows. 2-oxoglutarate(2OG)-dependent dioxygenase that catalyzes the conversion of 2-oxoglutarate to succinate and CO(2) in an iron-dependent manner. However, does not couple 2OG turnover to the hydroxylation of acyl-coenzyme A derivatives, implying that it is not directly involved in phytanoyl coenzyme-A metabolism. Does not show detectable activity towards fatty acid CoA thioesters. The sequence is that of Phytanoyl-CoA dioxygenase domain-containing protein 1 from Mus musculus (Mouse).